Here is a 482-residue protein sequence, read N- to C-terminus: Replication factor C large subunit (482 aa).

46–53 lines the ATP pocket; sequence GPPGSGKT. Residues 420 to 482 form a disordered region; that stretch reads EKETPKKKKK…KKQATLDSFF (63 aa). Over residues 442–476 the composition is skewed to basic and acidic residues; it reads KISEPPKEPLKEVIEETVEKTDKKEKEKKDPKKQA.

The protein belongs to the activator 1 small subunits family. RfcL subfamily. In terms of assembly, heteromultimer composed of small subunits (RfcS) and large subunits (RfcL).

Part of the RFC clamp loader complex which loads the PCNA sliding clamp onto DNA. This Methanococcus maripaludis (strain C7 / ATCC BAA-1331) protein is Replication factor C large subunit.